The primary structure comprises 610 residues: Protein arginine N-methyltransferase 5 (610 aa).

Positions 284-587 (LEIPLQPLCD…VDATKVWYEW (304 aa)) constitute an SAM-dependent MTase PRMT-type domain. Tyr300 contacts S-adenosyl-L-methionine. Phe303 contributes to the a protein binding site. Residues 309 to 310 (KY), Glu368, and 396 to 397 (DM) each bind S-adenosyl-L-methionine. Glu412 and Glu421 together coordinate a protein. Catalysis depends on proton donor/acceptor residues Glu412 and Glu421. Positions 470–610 (AFDYGYVSLL…TRGTGYNMRL (141 aa)) are interaction with vls.

It belongs to the class I-like SAM-binding methyltransferase superfamily. Protein arginine N-methyltransferase family. As to quaternary structure, interacts with vls. Expressed only in ovaries.

It localises to the cytoplasm. In terms of biological role, arginine methyltransferase that can both catalyze the formation of omega-N monomethylarginine (MMA) and symmetrical dimethylarginine (sDMA). Specifically mediates the symmetrical dimethylation of arginine residues in the small nuclear ribonucleoproteins SmD1 and SmD3. Required for arginine symmetrical dimethylation of piwi family proteins, piwi, aub and AGO3, during germline development. Required during oogenesis for pole cell formation in the pathway controlled by oskar (osk) and for abdominal segments during early embryogenesis. Involved in nanos (nos) and germ cell mRNAs localization. The protein is Protein arginine N-methyltransferase 5 of Drosophila melanogaster (Fruit fly).